A 265-amino-acid chain; its full sequence is Phosphonoacetaldehyde hydrolase (265 aa).

The active-site Nucleophile is aspartate 9. Mg(2+) contacts are provided by aspartate 9 and alanine 11. Lysine 50 serves as the catalytic Schiff-base intermediate with substrate. Aspartate 184 serves as a coordination point for Mg(2+).

This sequence belongs to the HAD-like hydrolase superfamily. PhnX family. In terms of assembly, homodimer. Mg(2+) is required as a cofactor.

It catalyses the reaction phosphonoacetaldehyde + H2O = acetaldehyde + phosphate + H(+). Involved in phosphonate degradation. In Lactiplantibacillus plantarum (strain ATCC BAA-793 / NCIMB 8826 / WCFS1) (Lactobacillus plantarum), this protein is Phosphonoacetaldehyde hydrolase.